A 105-amino-acid polypeptide reads, in one-letter code: Large ribosomal subunit protein uL24 (105 aa).

Belongs to the universal ribosomal protein uL24 family. In terms of assembly, part of the 50S ribosomal subunit.

In terms of biological role, one of two assembly initiator proteins, it binds directly to the 5'-end of the 23S rRNA, where it nucleates assembly of the 50S subunit. One of the proteins that surrounds the polypeptide exit tunnel on the outside of the subunit. This is Large ribosomal subunit protein uL24 from Nitrosococcus oceani (strain ATCC 19707 / BCRC 17464 / JCM 30415 / NCIMB 11848 / C-107).